The chain runs to 179 residues: MHTVLTRGNATVAYTLSVLACLTFSCFLSTVFLDYRTDANINTVRVLVKNVPDYGASREKHDLGFVTFDLQTNLTGIFNWNVKQLFLYLTAEYQTPANQLNQVVLWDKIILRGDNAVLDFKNMNTKYYFWDDGNGLKDNRNVSLYLSWNIIPNAGLLPSVQATGKHLFKFPADYATSSI.

Residues 1–12 (MHTVLTRGNATV) are Cytoplasmic-facing. A helical; Signal-anchor for type II membrane protein membrane pass occupies residues 13–33 (AYTLSVLACLTFSCFLSTVFL). Residues 34 to 179 (DYRTDANINT…FPADYATSSI (146 aa)) are Lumenal-facing. N-linked (GlcNAc...) asparagine glycosylation is found at asparagine 73 and asparagine 141.

The protein belongs to the SPCS3 family. Component of the signal peptidase complex (SPC) composed of a catalytic subunit twr/SEC11 and three accessory subunits Spase12/SPCS1, Spase25/SPCS2 and Spase22-23/SPCS3. The complex induces a local thinning of the ER membrane which is used to measure the length of the signal peptide (SP) h-region of protein substrates. This ensures the selectivity of the complex towards h-regions shorter than 18-20 amino acids.

It localises to the endoplasmic reticulum membrane. Functionally, essential component of the signal peptidase complex (SPC) which catalyzes the cleavage of N-terminal signal sequences from nascent proteins as they are translocated into the lumen of the endoplasmic reticulum. Essential for the SPC catalytic activity, possibly by stabilizing and positioning the active center of the complex close to the lumenal surface. Its function is as follows. (Microbial infection) Plays an important role in infection by flaviviruses such as West Nile virus and Dengue virus type 2. This is Signal peptidase complex subunit 3 (Spase22-23) from Drosophila melanogaster (Fruit fly).